The chain runs to 289 residues: E3 ubiquitin-protein ligase MARCHF1 (289 aa).

Residues methionine 1–serine 66 are responsible for low stability. The disordered stretch occupies residues histidine 13–arginine 69. Residues glycine 43–proline 58 are compositionally biased toward low complexity. Over residues threonine 59–arginine 69 the composition is skewed to polar residues. An RING-CH-type zinc finger spans residues valine 72–glutamate 133. Residues cysteine 80, cysteine 83, cysteine 97, cysteine 99, histidine 107, cysteine 110, cysteine 123, and cysteine 126 each contribute to the Zn(2+) site. Helical transmembrane passes span isoleucine 155–valine 175 and phenylalanine 197–valine 217. The segment at tyrosine 222–alanine 279 is responsible for down-regulation of CD86 and MHC class II cell surface expression.

Interacts with CD83; this interaction antagonizes MARCHF1-mediated MHC II and CD86 down-regulation. In terms of processing, ubiquitinated via ubiquitin-conjugating enzyme E2 D1/UBE2D1 independently of lysines, leading to proteolytic degradation. Post-translationally, has a short half-life. Instability/short half-life permits rapid changes that allow efficient induction of antigen presentation once antigen presenting cells, APCs, receive maturation signals. Small changes in protein levels significantly alter the cell surface display of MHC class II proteins. In terms of tissue distribution, expressed in antigen presenting cells, APCs, located in lymph nodes and spleen. Also expressed in lung. Expression is high in follicular B-cells, moderate in dendritic cells and low in splenic T-cells.

It localises to the golgi apparatus. It is found in the trans-Golgi network membrane. The protein resides in the lysosome membrane. Its subcellular location is the cytoplasmic vesicle membrane. The protein localises to the late endosome membrane. It localises to the early endosome membrane. It is found in the cell membrane. It carries out the reaction S-ubiquitinyl-[E2 ubiquitin-conjugating enzyme]-L-cysteine + [acceptor protein]-L-lysine = [E2 ubiquitin-conjugating enzyme]-L-cysteine + N(6)-ubiquitinyl-[acceptor protein]-L-lysine.. The protein operates within protein modification; protein ubiquitination. Functionally, E3 ubiquitin-protein ligase that mediates ubiquitination of TFRC, CD86, FAS and MHC class II proteins, such as HLA-DR alpha and beta, and promotes their subsequent endocytosis and sorting to lysosomes via multivesicular bodies. By constitutively ubiquitinating MHC class II proteins in immature dendritic cells, down-regulates their cell surface localization thus sequestering them in the intracellular endosomal system. Also regulates insulin sensitivity by controlling surface expression of the insulin receptor subunit beta/INSR by direct ubiquitination and degradation. In terms of biological role, (Microbial infection) Plays a role in iron metabolism by regulating the levels of the transferrin receptor TFRC during human cytomegalovirus infection, subsequently contributing to a proviral effect. The polypeptide is E3 ubiquitin-protein ligase MARCHF1 (Homo sapiens (Human)).